A 102-amino-acid chain; its full sequence is Thioredoxin (102 aa).

Positions 2–102 (LHIDELTFEN…ILIHTINKYL (101 aa)) constitute a Thioredoxin domain. Active-site nucleophile residues include cysteine 29 and cysteine 32. A disulfide bridge links cysteine 29 with cysteine 32.

This sequence belongs to the thioredoxin family.

The protein resides in the plastid. Its subcellular location is the chloroplast. Functionally, participates in various redox reactions through the reversible oxidation of its active center dithiol to a disulfide and catalyzes dithiol-disulfide exchange reactions. The chain is Thioredoxin (trxA) from Cyanidioschyzon merolae (strain NIES-3377 / 10D) (Unicellular red alga).